The following is a 1746-amino-acid chain: tRNA (32-2'-O)-methyltransferase regulator THADA (1746 aa).

Residues 1252–1286 are a coiled coil; it reads EQALAEIRRIVVELKALQLRLKNTEAANTKLNTNV.

It belongs to the THADA family. As to quaternary structure, interacts with SERCA. As to expression, detected in the larval fat body, salivary glands and wing imaginal disks (at protein level).

The protein localises to the endoplasmic reticulum. Functionally, together with methyltransferase Trm7-32, methylates the 2'-O-ribose of nucleotides at position 32 of the anticodon loop of substrate tRNAs. Plays a key role in energy homeostasis by regulating the balance between energy storage and heat production. Functions by negatively regulating Ca(2+) signaling pathways that are involved in heat production and maintaining correct lipid storage in the fat body. Regulates Ca(2+) signaling pathways by reducing the activity of the calcium-transporting ATPase SERCA possibly by promoting uncoupling of SERCA ATP hydrolysis from calcium pumping. May also function in the nervous system to control feeding behavior. The sequence is that of tRNA (32-2'-O)-methyltransferase regulator THADA from Drosophila melanogaster (Fruit fly).